The following is a 358-amino-acid chain: ATP-dependent (S)-NAD(P)H-hydrate dehydratase (358 aa).

The 292-residue stretch at 63–354 (LLQSAKNVIP…QQIHQAFEEL (292 aa)) folds into the YjeF C-terminal domain. (6S)-NADPHX is bound by residues glycine 163 and 220-226 (NVVEFDR). ATP is bound by residues 261-265 (KGQHD) and 280-289 (GSNRRCGGQG). Aspartate 290 contributes to the (6S)-NADPHX binding site.

This sequence belongs to the NnrD/CARKD family. The cofactor is Mg(2+).

The enzyme catalyses (6S)-NADHX + ATP = ADP + phosphate + NADH + H(+). It carries out the reaction (6S)-NADPHX + ATP = ADP + phosphate + NADPH + H(+). Catalyzes the dehydration of the S-form of NAD(P)HX at the expense of ATP, which is converted to ADP. Together with NAD(P)HX epimerase, which catalyzes the epimerization of the S- and R-forms, the enzyme allows the repair of both epimers of NAD(P)HX, a damaged form of NAD(P)H that is a result of enzymatic or heat-dependent hydration. This is ATP-dependent (S)-NAD(P)H-hydrate dehydratase from Nematostella vectensis (Starlet sea anemone).